The chain runs to 105 residues: Protein ORFg in retron Ec67 (105 aa).

The polypeptide is Protein ORFg in retron Ec67 (Escherichia coli).